We begin with the raw amino-acid sequence, 1474 residues long: Alpha-2-macroglobulin (1474 aa).

Residues 1–23 (MGKNKLLHPSLVLLLLVLLPTDA) form the signal peptide. An intrachain disulfide couples cysteine 48 to cysteine 86. A glycan (N-linked (GlcNAc...) (complex) asparagine) is linked at asparagine 55. 2 N-linked (GlcNAc...) asparagine glycosylation sites follow: asparagine 70 and asparagine 247. 2 disulfide bridges follow: cysteine 251–cysteine 299 and cysteine 269–cysteine 287. 2 N-linked (GlcNAc...) asparagine glycosylation sites follow: asparagine 396 and asparagine 410. Cystine bridges form between cysteine 470–cysteine 563, cysteine 595–cysteine 771, cysteine 642–cysteine 689, cysteine 821–cysteine 849, cysteine 847–cysteine 883, cysteine 921–cysteine 1321, cysteine 1079–cysteine 1127, and cysteine 1352–cysteine 1467. Residues 690–728 (PQLQQYEMHGPEGLRVGFYESDVMGRGHARLVHVEEPHT) are bait region. Residues glutamine 693 and glutamine 694 each participate in an isoglutamyl lysine isopeptide (Gln-Lys) (interchain with K-? in other proteins) cross-link. Inhibitory stretches follow at residues 704–709 (RVGFYE), 719–723 (RLVHV), and 730–735 (TVRKYF). An N-linked (GlcNAc...) asparagine glycan is attached at asparagine 869. A cross-link (isoglutamyl cysteine thioester (Cys-Gln)) is located at residues 972-975 (CGEQ). An N-linked (GlcNAc...) asparagine glycan is attached at asparagine 991. N-linked (GlcNAc...) (complex) asparagine glycosylation is present at asparagine 1424.

Belongs to the protease inhibitor I39 (alpha-2-macroglobulin) family. As to quaternary structure, homotetramer; disulfide-linked. As to expression, secreted in plasma.

The protein localises to the secreted. In terms of biological role, is able to inhibit all four classes of proteinases by a unique 'trapping' mechanism. This protein has a peptide stretch, called the 'bait region' which contains specific cleavage sites for different proteinases. When a proteinase cleaves the bait region, a conformational change is induced in the protein which traps the proteinase. The entrapped enzyme remains active against low molecular weight substrates (activity against high molecular weight substrates is greatly reduced). Following cleavage in the bait region, a thioester bond is hydrolyzed and mediates the covalent binding of the protein to the proteinase. This chain is Alpha-2-macroglobulin (A2M), found in Homo sapiens (Human).